The chain runs to 304 residues: Probable intron-encoded endonuclease 1 (304 aa).

The GIY-YIG domain occupies 84-175 (DKGGIYSFIN…RFNFDNLYNF (92 aa)).

To endonucleases of group I introns of fungi and phage.

The protein resides in the mitochondrion. In terms of biological role, mitochondrial DNA endonuclease involved in intron homing. This chain is Probable intron-encoded endonuclease 1, found in Neurospora crassa (strain ATCC 24698 / 74-OR23-1A / CBS 708.71 / DSM 1257 / FGSC 987).